Consider the following 65-residue polypeptide: Large ribosomal subunit protein bL32 (65 aa).

Residues 1-45 (MAVQQNKKTPSKRGMRRAHDVLKKPTFSVDFSSGETHRRHHVTPD) form a disordered region.

Belongs to the bacterial ribosomal protein bL32 family.

The sequence is that of Large ribosomal subunit protein bL32 from Nitrosococcus oceani (strain ATCC 19707 / BCRC 17464 / JCM 30415 / NCIMB 11848 / C-107).